Consider the following 88-residue polypeptide: Sec-independent protein translocase protein TatA (88 aa).

The chain crosses the membrane as a helical span at residues 3 to 23; the sequence is IFGVGLPEVTVILILALLIFG. The segment at 56–88 is disordered; that stretch reads MNEQDKDESPISIESNQTNEINQEKIDSENSKK. Positions 67-76 are enriched in polar residues; that stretch reads SIESNQTNEI. Basic and acidic residues predominate over residues 77-88; sequence NQEKIDSENSKK.

It belongs to the TatA/E family. In terms of assembly, forms a complex with TatC.

Its subcellular location is the cell inner membrane. Part of the twin-arginine translocation (Tat) system that transports large folded proteins containing a characteristic twin-arginine motif in their signal peptide across membranes. TatA could form the protein-conducting channel of the Tat system. This Prochlorococcus marinus (strain AS9601) protein is Sec-independent protein translocase protein TatA.